Reading from the N-terminus, the 239-residue chain is Enolase-phosphatase E1 (239 aa).

Mg(2+) is bound by residues aspartate 13 and glutamate 15. Substrate-binding positions include 133–134 and lysine 170; that span reads SS. Aspartate 196 serves as a coordination point for Mg(2+).

Belongs to the HAD-like hydrolase superfamily. MasA/MtnC family. Monomer. It depends on Mg(2+) as a cofactor.

It localises to the cytoplasm. The protein localises to the nucleus. It catalyses the reaction 5-methylsulfanyl-2,3-dioxopentyl phosphate + H2O = 1,2-dihydroxy-5-(methylsulfanyl)pent-1-en-3-one + phosphate. It participates in amino-acid biosynthesis; L-methionine biosynthesis via salvage pathway; L-methionine from S-methyl-5-thio-alpha-D-ribose 1-phosphate: step 3/6. It functions in the pathway amino-acid biosynthesis; L-methionine biosynthesis via salvage pathway; L-methionine from S-methyl-5-thio-alpha-D-ribose 1-phosphate: step 4/6. Its function is as follows. Bifunctional enzyme that catalyzes the enolization of 2,3-diketo-5-methylthiopentyl-1-phosphate (DK-MTP-1-P) into the intermediate 2-hydroxy-3-keto-5-methylthiopentenyl-1-phosphate (HK-MTPenyl-1-P), which is then dephosphorylated to form the acireductone 1,2-dihydroxy-3-keto-5-methylthiopentene (DHK-MTPene). The polypeptide is Enolase-phosphatase E1 (Chaetomium globosum (strain ATCC 6205 / CBS 148.51 / DSM 1962 / NBRC 6347 / NRRL 1970) (Soil fungus)).